The primary structure comprises 463 residues: Glycine--tRNA ligase (463 aa).

The substrate site is built by arginine 98 and glutamate 174. Residues 206–208 (RNE), 216–221 (FRTREF), 290–291 (EL), and 334–337 (GADR) contribute to the ATP site. Position 221 to 225 (221 to 225 (FEQME)) interacts with substrate. 330 to 334 (EPSLG) is a binding site for substrate.

The protein belongs to the class-II aminoacyl-tRNA synthetase family. Homodimer.

It is found in the cytoplasm. It carries out the reaction tRNA(Gly) + glycine + ATP = glycyl-tRNA(Gly) + AMP + diphosphate. Catalyzes the attachment of glycine to tRNA(Gly). This chain is Glycine--tRNA ligase, found in Staphylococcus aureus (strain Mu50 / ATCC 700699).